The sequence spans 413 residues: CinA-like protein (413 aa).

Belongs to the CinA family.

This is CinA-like protein from Desulfotalea psychrophila (strain LSv54 / DSM 12343).